Here is a 117-residue protein sequence, read N- to C-terminus: G antigen 13 (117 aa).

Residues 1-117 (MSWRGRSTYY…PEEGEKQSQC (117 aa)) are disordered. Acidic residues-rich tracts occupy residues 32–45 (FSDE…EEGE) and 87–96 (ECEDGPDGQE). A compositionally biased stretch (basic and acidic residues) spans 103-117 (EEVKTPEEGEKQSQC).

The protein belongs to the GAGE family.

The chain is G antigen 13 from Homo sapiens (Human).